The chain runs to 263 residues: Tryptophan synthase alpha chain (263 aa).

Active-site proton acceptor residues include E50 and D61.

This sequence belongs to the TrpA family. As to quaternary structure, tetramer of two alpha and two beta chains.

It catalyses the reaction (1S,2R)-1-C-(indol-3-yl)glycerol 3-phosphate + L-serine = D-glyceraldehyde 3-phosphate + L-tryptophan + H2O. Its pathway is amino-acid biosynthesis; L-tryptophan biosynthesis; L-tryptophan from chorismate: step 5/5. Functionally, the alpha subunit is responsible for the aldol cleavage of indoleglycerol phosphate to indole and glyceraldehyde 3-phosphate. The sequence is that of Tryptophan synthase alpha chain from Clostridium acetobutylicum (strain ATCC 824 / DSM 792 / JCM 1419 / IAM 19013 / LMG 5710 / NBRC 13948 / NRRL B-527 / VKM B-1787 / 2291 / W).